A 92-amino-acid polypeptide reads, in one-letter code: Regakine-1 (92 aa).

The signal sequence occupies residues 1–21 (MRVSLAALAFLLTLAVLHSEA). Cystine bridges form between C32–C56 and C33–C72.

This sequence belongs to the intercrine beta (chemokine CC) family. In terms of tissue distribution, plasma serum.

The protein resides in the secreted. Chemotactic activity for neutrophils and lymphocytes. Binds to heparin. This is Regakine-1 from Bos taurus (Bovine).